A 542-amino-acid chain; its full sequence is 2,3-bisphosphoglycerate-independent phosphoglycerate mutase (542 aa).

Mn(2+)-binding residues include aspartate 24 and serine 74. The Phosphoserine intermediate role is filled by serine 74. Substrate contacts are provided by residues histidine 135, 165-166 (RD), arginine 197, arginine 203, 268-271 (RPDR), and lysine 341. Residues aspartate 408, histidine 412, aspartate 449, histidine 450, and histidine 467 each coordinate Mn(2+).

This sequence belongs to the BPG-independent phosphoglycerate mutase family. As to quaternary structure, monomer. Mn(2+) serves as cofactor.

The catalysed reaction is (2R)-2-phosphoglycerate = (2R)-3-phosphoglycerate. Its pathway is carbohydrate degradation; glycolysis; pyruvate from D-glyceraldehyde 3-phosphate: step 3/5. Its function is as follows. Catalyzes the interconversion of 2-phosphoglycerate and 3-phosphoglycerate. This is 2,3-bisphosphoglycerate-independent phosphoglycerate mutase from Prochlorococcus marinus (strain NATL1A).